Consider the following 340-residue polypeptide: DNA-directed RNA polymerase subunit alpha (340 aa).

The segment at 1-236 (MLSLSKNWNT…EQLQLFIAFE (236 aa)) is alpha N-terminal domain (alpha-NTD). An alpha C-terminal domain (alpha-CTD) region spans residues 251–340 (FSPYLLKRVD…LSKRYEDSYN (90 aa)).

Belongs to the RNA polymerase alpha chain family. Homodimer. The RNAP catalytic core consists of 2 alpha, 1 beta, 1 beta' and 1 omega subunit. When a sigma factor is associated with the core the holoenzyme is formed, which can initiate transcription.

It catalyses the reaction RNA(n) + a ribonucleoside 5'-triphosphate = RNA(n+1) + diphosphate. Its function is as follows. DNA-dependent RNA polymerase catalyzes the transcription of DNA into RNA using the four ribonucleoside triphosphates as substrates. This Rickettsia typhi (strain ATCC VR-144 / Wilmington) protein is DNA-directed RNA polymerase subunit alpha.